Consider the following 645-residue polypeptide: E3 ubiquitin-protein ligase ORTHRUS 2 (645 aa).

The PHD-type zinc finger occupies 12–63 (DGVCMRCKSNPPPEESLTCGTCVTPWHVSCLSSPPKTLASTLQWHCPDCSGE). Residues 96–133 (LSTEEKAKMRQRLLSGKGVEEDDEEEKRKKKGKGKNPN) form a disordered region. An RING-type 1 zinc finger spans residues 146-185 (CSFCMQLPERPVTKPCGHNACLKCFEKWMGQGKRTCGKCR). The 150-residue stretch at 273-422 (VRNQGLLVGE…FKVCRYLFVR (150 aa)) folds into the YDG domain. The RING-type 2 zinc-finger motif lies at 518–575 (CQICQQVLTLPVTTPCAHNFCKACLEAKFAGKTLVRERSTGGRTLRSRKNVLNCPCCP). Residues 583-613 (QNPQVNREVAEVIEKLKTQEEDTAELEDEDE) are a coiled coil. Residues 599-645 (KTQEEDTAELEDEDEGECSGTTPEEDSEQPKKRIKLDTDATVSATIR) form a disordered region. Residues 603–625 (EDTAELEDEDEGECSGTTPEEDS) show a composition bias toward acidic residues. Basic and acidic residues predominate over residues 626–636 (EQPKKRIKLDT).

Interacts with histones CENH3, HTB2, HTR3 and H4. As to expression, mostly expressed in inflorescence and, to a lower extent, in leaves.

It localises to the nucleus. It carries out the reaction S-ubiquitinyl-[E2 ubiquitin-conjugating enzyme]-L-cysteine + [acceptor protein]-L-lysine = [E2 ubiquitin-conjugating enzyme]-L-cysteine + N(6)-ubiquitinyl-[acceptor protein]-L-lysine.. Its pathway is protein modification; protein ubiquitination. Its function is as follows. E3 ubiquitin-protein ligase. Participates in CpG methylation-dependent transcriptional regulation and epigenetic transcriptional silencing. Mediates ubiquitination with the E2 ubiquitin-conjugating enzyme UBC11. Promotes methylation-mediated gene silencing leading, for example, to early flowering. Associates with methylated DNA, and can bind to CpG, CpNpG, and CpNpN DNA motifs, with a strong preference for methylated forms, and with highest affinity for CpG substrate. Probably acts at the DNA methylation?histone interface to maintain centromeric heterochromatin. The sequence is that of E3 ubiquitin-protein ligase ORTHRUS 2 (ORTH2) from Arabidopsis thaliana (Mouse-ear cress).